Here is a 152-residue protein sequence, read N- to C-terminus: MDERNDSARSEAMFEARHEGRYRRVEVITGPVRRRNWTDEEKALMLAESAEPDANISAIARRFGVNRGLLNTWRRAAGQIGPVLGEPALEQPAFVPIRIADDQNEHQADEAGIAEGAAGRIEIELGGGRMIVTGNVSPDLAHAVVMALRGRR.

Belongs to the transposase 8 family.

This is an uncharacterized protein from Sinorhizobium fredii (strain NBRC 101917 / NGR234).